The primary structure comprises 216 residues: MAQQDTDQQHTGVLPVDDDGFVIDAEDCEEREAAYRERGTSRPITVVGNPVLHKECKDVTDFGAELEQLVADMFASQRTAEGVGLAANQIGVDLKVFVYDCQDDEGTRHVGVVCNPKLVDLPADRRRLDDSNEGCLSVPTAYAPLARPDYAEVTGQDEKGNPIKVRGTGYFARCLQHETDHLYGYLYIDRLSKRERKDALRQMAENEPRYPVVAND.

The Fe cation site is built by Cys135 and His177. Glu178 is an active-site residue. His181 lines the Fe cation pocket.

Belongs to the polypeptide deformylase family. Fe(2+) is required as a cofactor.

It carries out the reaction N-terminal N-formyl-L-methionyl-[peptide] + H2O = N-terminal L-methionyl-[peptide] + formate. Functionally, removes the formyl group from the N-terminal Met of newly synthesized proteins. Requires at least a dipeptide for an efficient rate of reaction. N-terminal L-methionine is a prerequisite for activity but the enzyme has broad specificity at other positions. In Streptomyces avermitilis (strain ATCC 31267 / DSM 46492 / JCM 5070 / NBRC 14893 / NCIMB 12804 / NRRL 8165 / MA-4680), this protein is Peptide deformylase 1.